The chain runs to 176 residues: MNSASDTHFSLFGLPEHFEVDDGALNAAYRTVQSRAHPDRHAHASDAERRVAMQWATRANEAYQTLRDPLKRATYLLHLRGVDVQAENNTAMPPAFLMQQLEWRESLADAKAAGDLDALDDLLAMLRGEKRARYQTLAGLLNGGGHDAAAADAVRQLMFIEKIERDTAEAIDRLDD.

A J domain is found at 7 to 79 (THFSLFGLPE…LKRATYLLHL (73 aa)).

It belongs to the HscB family. As to quaternary structure, interacts with HscA and stimulates its ATPase activity.

Its function is as follows. Co-chaperone involved in the maturation of iron-sulfur cluster-containing proteins. Seems to help targeting proteins to be folded toward HscA. The protein is Co-chaperone protein HscB homolog of Ralstonia nicotianae (strain ATCC BAA-1114 / GMI1000) (Ralstonia solanacearum).